The primary structure comprises 824 residues: Neuronal PAS domain-containing protein 2 (824 aa).

Residues 1-10 are compositionally biased toward basic and acidic residues; that stretch reads MDEDEKDRAK. A disordered region spans residues 1–21; the sequence is MDEDEKDRAKRASRNKSEKKR. The interval 1–61 is sufficient for heterodimer formation with BMAL1, E-box binding and for the effect of NADPH; that stretch reads MDEDEKDRAK…VIGFLQKHNE (61 aa). The 51-residue stretch at 9-59 folds into the bHLH domain; sequence AKRASRNKSEKKRRDQFNVLIKELSSMLPGNTRKMDKTTVLEKVIGFLQKH. The region spanning 82–152 is the PAS 1 domain; that stretch reads NEEFTQLMLE…KILSSHMLVT (71 aa). Heme b-binding residues include H119 and H171. Positions 237–307 constitute a PAS 2 domain; the sequence is FLKEMCIVDE…RCHQHLMQFG (71 aa). The region spanning 311–354 is the PAC domain; it reads SCCYRFLTKGQQWIWLQTHYYITYHQWNSKPEFIVCTHSVVSYA. Disordered stretches follow at residues 367 to 437, 556 to 667, 681 to 704, and 739 to 824; these read EDPP…MAEA, SSTQ…PDFS, QPMMPGSCDARQPSEVSRTGRQVK, and PSFP…QPPR. Residues 378–390 are compositionally biased toward basic and acidic residues; sequence ALKDKGSSLEPRQ. The segment covering 421 to 431 has biased composition (polar residues); that stretch reads TAMSEPTSTPT. A compositionally biased stretch (low complexity) spans 559–576; sequence QRPEAQQQLQQRSAAVTQ. Residues 587-610 show a composition bias toward polar residues; it reads GQISSAQVTSQHLLRESSVISTQG. Positions 614-636 are enriched in low complexity; that stretch reads MRSSQLMQSSGRSGSSLVSPFSS. Polar residues-rich tracts occupy residues 645-664 and 694-704; these read LNLTTPASTSQDASQCQPSP and SEVSRTGRQVK. Positions 739 to 760 are enriched in low complexity; sequence PSFPASQPSPLQPAQARQQPPQ. The span at 766 to 789 shows a compositional bias: polar residues; sequence QAPTSLHSEQQDSLLLSTYSQQPG. The segment covering 794–805 has biased composition (pro residues); sequence PQPPPAQPQPLR. Positions 809 to 824 are enriched in low complexity; that stretch reads RVSSLSESSGLQQPPR.

Component of the circadian clock oscillator which includes the CRY proteins, CLOCK or NPAS2, BMAL1 or BMAL2, CSNK1D and/or CSNK1E, TIMELESS and the PER proteins. Efficient DNA binding requires dimerization with another bHLH protein. Forms a heterodimer with BMAL1 and this heterodimerization is required for E-box-dependent transactivation. Interacts with NCOA3, KAT2B, CREBBP and EP300. It depends on heme as a cofactor.

The protein localises to the nucleus. Its activity is regulated as follows. Carbon monoxide (CO) and the redox state of the cell can modulate the transcriptional activity of the NPAS2-BMAL1 heterodimer. NADH and NADPH enhance the DNA-binding activity of the heterodimer whereas CO binds the heme group in NPAS2 and inhibits the DNA-binding activity of the heterodimer. Its function is as follows. Transcriptional activator which forms a core component of the circadian clock. The circadian clock, an internal time-keeping system, regulates various physiological processes through the generation of approximately 24 hour circadian rhythms in gene expression, which are translated into rhythms in metabolism and behavior. It is derived from the Latin roots 'circa' (about) and 'diem' (day) and acts as an important regulator of a wide array of physiological functions including metabolism, sleep, body temperature, blood pressure, endocrine, immune, cardiovascular, and renal function. Consists of two major components: the central clock, residing in the suprachiasmatic nucleus (SCN) of the brain, and the peripheral clocks that are present in nearly every tissue and organ system. Both the central and peripheral clocks can be reset by environmental cues, also known as Zeitgebers (German for 'timegivers'). The predominant Zeitgeber for the central clock is light, which is sensed by retina and signals directly to the SCN. The central clock entrains the peripheral clocks through neuronal and hormonal signals, body temperature and feeding-related cues, aligning all clocks with the external light/dark cycle. Circadian rhythms allow an organism to achieve temporal homeostasis with its environment at the molecular level by regulating gene expression to create a peak of protein expression once every 24 hours to control when a particular physiological process is most active with respect to the solar day. Transcription and translation of core clock components (CLOCK, NPAS2, BMAL1, BMAL2, PER1, PER2, PER3, CRY1 and CRY2) plays a critical role in rhythm generation, whereas delays imposed by post-translational modifications (PTMs) are important for determining the period (tau) of the rhythms (tau refers to the period of a rhythm and is the length, in time, of one complete cycle). A diurnal rhythm is synchronized with the day/night cycle, while the ultradian and infradian rhythms have a period shorter and longer than 24 hours, respectively. Disruptions in the circadian rhythms contribute to the pathology of cardiovascular diseases, cancer, metabolic syndromes and aging. A transcription/translation feedback loop (TTFL) forms the core of the molecular circadian clock mechanism. Transcription factors, CLOCK or NPAS2 and BMAL1 or BMAL2, form the positive limb of the feedback loop, act in the form of a heterodimer and activate the transcription of core clock genes and clock-controlled genes (involved in key metabolic processes), harboring E-box elements (5'-CACGTG-3') within their promoters. The core clock genes: PER1/2/3 and CRY1/2 which are transcriptional repressors form the negative limb of the feedback loop and interact with the CLOCK|NPAS2-BMAL1|BMAL2 heterodimer inhibiting its activity and thereby negatively regulating their own expression. This heterodimer also activates nuclear receptors NR1D1/2 and RORA/B/G, which form a second feedback loop and which activate and repress BMAL1 transcription, respectively. The NPAS2-BMAL1 heterodimer positively regulates the expression of MAOA, F7 and LDHA and modulates the circadian rhythm of daytime contrast sensitivity by regulating the rhythmic expression of adenylate cyclase type 1 (ADCY1) in the retina. NPAS2 plays an important role in sleep homeostasis and in maintaining circadian behaviors in normal light/dark and feeding conditions and in the effective synchronization of feeding behavior with scheduled food availability. Regulates the gene transcription of key metabolic pathways in the liver and is involved in DNA damage response by regulating several cell cycle and DNA repair genes. Controls the circadian rhythm of NR0B2 expression by binding rhythmically to its promoter. Mediates the diurnal variation in the expression of GABARA1 receptor in the brain and contributes to the regulation of anxiety-like behaviors and GABAergic neurotransmission in the ventral striatum. The chain is Neuronal PAS domain-containing protein 2 (NPAS2) from Homo sapiens (Human).